A 648-amino-acid polypeptide reads, in one-letter code: Threonine--tRNA ligase (648 aa).

The region spanning 1–61 (MIDIILPDGS…INTATVKAIT (61 aa)) is the TGS domain. The segment at 243–549 (DHRKLGRELE…LIEHYSGKLP (307 aa)) is catalytic. Residues C349, H400, and H526 each coordinate Zn(2+).

It belongs to the class-II aminoacyl-tRNA synthetase family. In terms of assembly, homodimer. The cofactor is Zn(2+).

The protein localises to the cytoplasm. The enzyme catalyses tRNA(Thr) + L-threonine + ATP = L-threonyl-tRNA(Thr) + AMP + diphosphate + H(+). Its function is as follows. Catalyzes the attachment of threonine to tRNA(Thr) in a two-step reaction: L-threonine is first activated by ATP to form Thr-AMP and then transferred to the acceptor end of tRNA(Thr). Also edits incorrectly charged L-seryl-tRNA(Thr). This Orientia tsutsugamushi (strain Ikeda) (Rickettsia tsutsugamushi) protein is Threonine--tRNA ligase.